The chain runs to 293 residues: Elongation factor Ts (293 aa).

Residues 80 to 83 are involved in Mg(2+) ion dislocation from EF-Tu; sequence TDFV.

This sequence belongs to the EF-Ts family.

The protein resides in the cytoplasm. Functionally, associates with the EF-Tu.GDP complex and induces the exchange of GDP to GTP. It remains bound to the aminoacyl-tRNA.EF-Tu.GTP complex up to the GTP hydrolysis stage on the ribosome. The protein is Elongation factor Ts of Staphylococcus aureus (strain Mu3 / ATCC 700698).